Here is a 101-residue protein sequence, read N- to C-terminus: Urease subunit beta (101 aa).

This sequence belongs to the urease beta subunit family. In terms of assembly, heterotrimer of UreA (gamma), UreB (beta) and UreC (alpha) subunits. Three heterotrimers associate to form the active enzyme.

It is found in the cytoplasm. It carries out the reaction urea + 2 H2O + H(+) = hydrogencarbonate + 2 NH4(+). It functions in the pathway nitrogen metabolism; urea degradation; CO(2) and NH(3) from urea (urease route): step 1/1. The protein is Urease subunit beta of Roseobacter denitrificans (strain ATCC 33942 / OCh 114) (Erythrobacter sp. (strain OCh 114)).